The primary structure comprises 663 residues: uncharacterized protein (663 aa).

207–214 (GPPGTGKT) contacts ATP.

It belongs to the DNA2/NAM7 helicase family.

This is an uncharacterized protein from Methanocaldococcus jannaschii (strain ATCC 43067 / DSM 2661 / JAL-1 / JCM 10045 / NBRC 100440) (Methanococcus jannaschii).